Consider the following 437-residue polypeptide: Phosphomethylpyrimidine synthase (437 aa).

Residues asparagine 69, methionine 98, tyrosine 127, histidine 163, 185 to 187 (SRG), 226 to 229 (DACR), and glutamate 265 contribute to the substrate site. Residue histidine 269 participates in Zn(2+) binding. Tyrosine 292 contributes to the substrate binding site. Histidine 333 contacts Zn(2+). Cysteine 409, cysteine 412, and cysteine 416 together coordinate [4Fe-4S] cluster.

It belongs to the ThiC family. Requires [4Fe-4S] cluster as cofactor.

It catalyses the reaction 5-amino-1-(5-phospho-beta-D-ribosyl)imidazole + S-adenosyl-L-methionine = 4-amino-2-methyl-5-(phosphooxymethyl)pyrimidine + CO + 5'-deoxyadenosine + formate + L-methionine + 3 H(+). The protein operates within cofactor biosynthesis; thiamine diphosphate biosynthesis. Functionally, catalyzes the synthesis of the hydroxymethylpyrimidine phosphate (HMP-P) moiety of thiamine from aminoimidazole ribotide (AIR) in a radical S-adenosyl-L-methionine (SAM)-dependent reaction. This chain is Phosphomethylpyrimidine synthase, found in Clostridium botulinum (strain 657 / Type Ba4).